The following is a 398-amino-acid chain: Pectate lyase 1 (398 aa).

The signal sequence occupies residues 1–25 (MGIKHCCYILYFTLALVTLLQPVRS). Asn37 is a glycosylation site (N-linked (GlcNAc...) asparagine). Residues Cys55 and Cys72 are joined by a disulfide bond. Residues Asp195, Asp219, and Asp223 each contribute to the Ca(2+) site. Arg275 is an active-site residue.

It belongs to the polysaccharide lyase 1 family. Amb a subfamily. Monomer. Ca(2+) serves as cofactor. The N-terminus is blocked. As to expression, pollen and flowers.

It carries out the reaction Eliminative cleavage of (1-&gt;4)-alpha-D-galacturonan to give oligosaccharides with 4-deoxy-alpha-D-galact-4-enuronosyl groups at their non-reducing ends.. The protein operates within glycan metabolism; pectin degradation; 2-dehydro-3-deoxy-D-gluconate from pectin: step 2/5. Its function is as follows. Has pectate lyase activity. This is Pectate lyase 1 from Ambrosia artemisiifolia (Common ragweed).